The chain runs to 232 residues: Ion-translocating oxidoreductase complex subunit E (232 aa).

Helical transmembrane passes span 18 to 38 (GLVQLLGLCPLLAVTATLTNA), 39 to 59 (LGLGLATVAVLIGSNVLVSLV), 69 to 89 (IPVFVMIIAALVTVVQLVINA), 93 to 113 (GLYLSLGIFLPLIVTNCVIIG), 128 to 148 (AFDGLMMGTGFTAVLAVLGAV), and 182 to 202 (SFLLAMLPPGAFIAMGLLIAG).

This sequence belongs to the NqrDE/RnfAE family. As to quaternary structure, the complex is composed of six subunits: RnfA, RnfB, RnfC, RnfD, RnfE and RnfG.

Its subcellular location is the cell inner membrane. In terms of biological role, part of a membrane-bound complex that couples electron transfer with translocation of ions across the membrane. In Shewanella amazonensis (strain ATCC BAA-1098 / SB2B), this protein is Ion-translocating oxidoreductase complex subunit E.